The following is a 223-amino-acid chain: Probable tRNA-splicing endonuclease subunit tsp-1 (223 aa).

The segment at 1 to 55 is disordered; that stretch reads MESGSTPPTDKQIRENEQDGTGHQGKLLARPTSTRQQQQQQQQQPSHSVSQSVSQ. A compositionally biased stretch (low complexity) spans 30–55; that stretch reads RPTSTRQQQQQQQQQPSHSVSQSVSQ.

This sequence belongs to the SEN15 family. In terms of assembly, tRNA splicing endonuclease is a heterotetramer composed of tsp-2/sen2, tsp-1/sen15, tsp-4/sen34 and tsp-5/sen54. Interacts directly with tsp-4/sen34.

Functionally, non-catalytic subunit of the tRNA-splicing endonuclease complex, a complex responsible for identification and cleavage of the splice sites in pre-tRNA. It cleaves pre-tRNA at the 5' and 3' splice sites to release the intron. The products are an intron and two tRNA half-molecules bearing 2',3' cyclic phosphate and 5'-OH termini. There are no conserved sequences at the splice sites, but the intron is invariably located at the same site in the gene, placing the splice sites an invariant distance from the constant structural features of the tRNA body. This Neurospora crassa (strain ATCC 24698 / 74-OR23-1A / CBS 708.71 / DSM 1257 / FGSC 987) protein is Probable tRNA-splicing endonuclease subunit tsp-1 (tsp-1).